A 401-amino-acid chain; its full sequence is S-adenosylmethionine synthase (401 aa).

His-15 is a binding site for ATP. Position 17 (Asp-17) interacts with Mg(2+). Glu-43 serves as a coordination point for K(+). L-methionine contacts are provided by Glu-56 and Gln-99. A flexible loop region spans residues 99-109; the sequence is QSPEIGAGVDT. The disordered stretch occupies residues 101–132; that stretch reads PEIGAGVDTSHEVRGSSSTDEDDRQGAGDQGL. ATP contacts are provided by residues 174–176, Asp-254, 260–261, Ala-277, and Lys-281; these read DGK and RK. Residue Asp-254 coordinates L-methionine. Lys-285 contributes to the L-methionine binding site.

The protein belongs to the AdoMet synthase family. Homotetramer; dimer of dimers. Mg(2+) is required as a cofactor. It depends on K(+) as a cofactor.

Its subcellular location is the cytoplasm. It catalyses the reaction L-methionine + ATP + H2O = S-adenosyl-L-methionine + phosphate + diphosphate. It functions in the pathway amino-acid biosynthesis; S-adenosyl-L-methionine biosynthesis; S-adenosyl-L-methionine from L-methionine: step 1/1. In terms of biological role, catalyzes the formation of S-adenosylmethionine (AdoMet) from methionine and ATP. The overall synthetic reaction is composed of two sequential steps, AdoMet formation and the subsequent tripolyphosphate hydrolysis which occurs prior to release of AdoMet from the enzyme. The polypeptide is S-adenosylmethionine synthase (Corynebacterium urealyticum (strain ATCC 43042 / DSM 7109)).